Consider the following 78-residue polypeptide: Large ribosomal subunit protein bL28 (78 aa).

The disordered stretch occupies residues 1–25 (MARVCQVTGKRPMSGHHVSHANNKT). Residues 13-25 (MSGHHVSHANNKT) show a composition bias toward basic residues.

It belongs to the bacterial ribosomal protein bL28 family.

This Nitrosomonas eutropha (strain DSM 101675 / C91 / Nm57) protein is Large ribosomal subunit protein bL28.